The chain runs to 53 residues: ATP synthase protein 8 (53 aa).

A helical membrane pass occupies residues 9–29 (WITSMLMFWISVSILFSTLWW).

The protein belongs to the ATPase protein 8 family. F-type ATPases have 2 components, CF(1) - the catalytic core - and CF(0) - the membrane proton channel.

The protein localises to the mitochondrion membrane. Functionally, mitochondrial membrane ATP synthase (F(1)F(0) ATP synthase or Complex V) produces ATP from ADP in the presence of a proton gradient across the membrane which is generated by electron transport complexes of the respiratory chain. F-type ATPases consist of two structural domains, F(1) - containing the extramembraneous catalytic core and F(0) - containing the membrane proton channel, linked together by a central stalk and a peripheral stalk. During catalysis, ATP synthesis in the catalytic domain of F(1) is coupled via a rotary mechanism of the central stalk subunits to proton translocation. Part of the complex F(0) domain. Minor subunit located with subunit a in the membrane. This chain is ATP synthase protein 8 (MT-ATP8), found in Lumbricus terrestris (Common earthworm).